Reading from the N-terminus, the 63-residue chain is MSKVCEICGKGPSFGNNVSHANNKTSRTWYPNLQKIKAVKNGTVRSIKVCTRCIRSGHVTKAL.

Belongs to the bacterial ribosomal protein bL28 family.

The protein is Large ribosomal subunit protein bL28 of Geotalea daltonii (strain DSM 22248 / JCM 15807 / FRC-32) (Geobacter daltonii).